We begin with the raw amino-acid sequence, 181 residues long: Large ribosomal subunit protein uL5 (181 aa).

Belongs to the universal ribosomal protein uL5 family. In terms of assembly, part of the 50S ribosomal subunit; part of the 5S rRNA/L5/L18/L25 subcomplex. Contacts the 5S rRNA and the P site tRNA. Forms a bridge to the 30S subunit in the 70S ribosome.

In terms of biological role, this is one of the proteins that bind and probably mediate the attachment of the 5S RNA into the large ribosomal subunit, where it forms part of the central protuberance. In the 70S ribosome it contacts protein S13 of the 30S subunit (bridge B1b), connecting the 2 subunits; this bridge is implicated in subunit movement. Contacts the P site tRNA; the 5S rRNA and some of its associated proteins might help stabilize positioning of ribosome-bound tRNAs. This chain is Large ribosomal subunit protein uL5, found in Trichodesmium erythraeum (strain IMS101).